The sequence spans 313 residues: Aspartate carbamoyltransferase catalytic subunit (313 aa).

The carbamoyl phosphate site is built by Arg66 and Thr67. L-aspartate is bound at residue Lys94. Positions 116, 144, and 147 each coordinate carbamoyl phosphate. Residues Arg177 and Arg231 each coordinate L-aspartate. 2 residues coordinate carbamoyl phosphate: Gly272 and Pro273.

This sequence belongs to the aspartate/ornithine carbamoyltransferase superfamily. ATCase family. Heterododecamer (2C3:3R2) of six catalytic PyrB chains organized as two trimers (C3), and six regulatory PyrI chains organized as three dimers (R2).

It carries out the reaction carbamoyl phosphate + L-aspartate = N-carbamoyl-L-aspartate + phosphate + H(+). It functions in the pathway pyrimidine metabolism; UMP biosynthesis via de novo pathway; (S)-dihydroorotate from bicarbonate: step 2/3. In terms of biological role, catalyzes the condensation of carbamoyl phosphate and aspartate to form carbamoyl aspartate and inorganic phosphate, the committed step in the de novo pyrimidine nucleotide biosynthesis pathway. The protein is Aspartate carbamoyltransferase catalytic subunit of Pelagibacter ubique (strain HTCC1062).